A 200-amino-acid chain; its full sequence is Glutathione S-transferase 1-1 (200 aa).

The GST N-terminal domain occupies Gly1–Asp73. Residues Ser2, His43 to Ile45, and Glu57 to Arg59 each bind glutathione. The region spanning Cys79–Phe200 is the GST C-terminal domain.

The protein belongs to the GST superfamily. Theta family. As to quaternary structure, homodimer.

It catalyses the reaction RX + glutathione = an S-substituted glutathione + a halide anion + H(+). The enzyme catalyses 1,1,1-trichloro-2,2-bis(4-chlorophenyl)ethane = 1,1-dichloro-2,2-bis(4-chlorophenyl)ethylene + chloride + H(+). Functionally, conjugation of reduced glutathione to a wide number of exogenous and endogenous hydrophobic electrophiles. Has DDT dehydrochlorinase activity. The chain is Glutathione S-transferase 1-1 (GstD1) from Drosophila teissieri (Fruit fly).